We begin with the raw amino-acid sequence, 817 residues long: Transcription factor yanR (817 aa).

Residues 19–46 constitute a DNA-binding region (zn(2)-C6 fungal-type); that stretch reads CIVCRRRKVRCGREHPECANCVRMKENC. 3 disordered regions span residues 102 to 161, 180 to 218, and 733 to 775; these read GNVL…PQVD, HHASSRAGTSRTSSVSQDASPAVSESARAPSTSTSYSGL, and SLSS…VADS. A compositionally biased stretch (pro residues) spans 113-127; sequence LPRPTISPASAPPPQ. Residues 146 to 158 are compositionally biased toward polar residues; the sequence is SSTILTPAPSSHP. The span at 184-195 shows a compositional bias: low complexity; it reads SRAGTSRTSSVS. Polar residues-rich tracts occupy residues 208-217 and 748-760; these read APSTSTSYSG and EAPSTTTAPQMPS.

Its subcellular location is the nucleus. Functionally, transcription factor that regulates the expression of the gene cluster that mediates the biosynthesis of yanuthone D, a fungal isoprenoid epoxycyclohexenone that acts as an antibiotic against fungi and bacteria. This chain is Transcription factor yanR, found in Aspergillus niger (strain ATCC 1015 / CBS 113.46 / FGSC A1144 / LSHB Ac4 / NCTC 3858a / NRRL 328 / USDA 3528.7).